A 265-amino-acid polypeptide reads, in one-letter code: Hydroxyethylthiazole kinase 2 (265 aa).

Position 39 (Met-39) interacts with substrate. Residues Lys-115 and Thr-168 each coordinate ATP. Gly-195 is a binding site for substrate.

The protein belongs to the Thz kinase family. Requires Mg(2+) as cofactor.

The enzyme catalyses 5-(2-hydroxyethyl)-4-methylthiazole + ATP = 4-methyl-5-(2-phosphooxyethyl)-thiazole + ADP + H(+). It participates in cofactor biosynthesis; thiamine diphosphate biosynthesis; 4-methyl-5-(2-phosphoethyl)-thiazole from 5-(2-hydroxyethyl)-4-methylthiazole: step 1/1. Its function is as follows. Catalyzes the phosphorylation of the hydroxyl group of 4-methyl-5-beta-hydroxyethylthiazole (THZ). This Clostridium botulinum (strain Kyoto / Type A2) protein is Hydroxyethylthiazole kinase 2.